The primary structure comprises 502 residues: ATP synthase subunit alpha (502 aa).

Position 169 to 176 (169 to 176 (GDRQTGKT)) interacts with ATP.

The protein belongs to the ATPase alpha/beta chains family. As to quaternary structure, F-type ATPases have 2 components, CF(1) - the catalytic core - and CF(0) - the membrane proton channel. CF(1) has five subunits: alpha(3), beta(3), gamma(1), delta(1), epsilon(1). CF(0) has three main subunits: a(1), b(2) and c(9-12). The alpha and beta chains form an alternating ring which encloses part of the gamma chain. CF(1) is attached to CF(0) by a central stalk formed by the gamma and epsilon chains, while a peripheral stalk is formed by the delta and b chains.

The protein resides in the cell membrane. It carries out the reaction ATP + H2O + 4 H(+)(in) = ADP + phosphate + 5 H(+)(out). Its function is as follows. Produces ATP from ADP in the presence of a proton gradient across the membrane. The alpha chain is a regulatory subunit. This chain is ATP synthase subunit alpha, found in Staphylococcus aureus (strain bovine RF122 / ET3-1).